A 394-amino-acid polypeptide reads, in one-letter code: Lipid-A-disaccharide synthase (394 aa).

Belongs to the LpxB family.

It catalyses the reaction a lipid X + a UDP-2-N,3-O-bis[(3R)-3-hydroxyacyl]-alpha-D-glucosamine = a lipid A disaccharide + UDP + H(+). It participates in bacterial outer membrane biogenesis; LPS lipid A biosynthesis. Condensation of UDP-2,3-diacylglucosamine and 2,3-diacylglucosamine-1-phosphate to form lipid A disaccharide, a precursor of lipid A, a phosphorylated glycolipid that anchors the lipopolysaccharide to the outer membrane of the cell. The polypeptide is Lipid-A-disaccharide synthase (lpxB) (Synechocystis sp. (strain ATCC 27184 / PCC 6803 / Kazusa)).